Here is a 147-residue protein sequence, read N- to C-terminus: MTTTIYILNGPNLNLLGQRQPEIYGHETLADVERRCAAVAAEKGFSVRLFQSNHEGAIVDQIHEARQAACGIVINPAAYTHTSVAILDALNAFEGPVIECHISNVHKRESFRHHSYVSLRADGVLAGFGIEGYELAVRRICSLCAGG.

Tyrosine 24 acts as the Proton acceptor in catalysis. Substrate contacts are provided by asparagine 75, histidine 81, and aspartate 88. Histidine 101 functions as the Proton donor in the catalytic mechanism. Residues 102-103 (IS) and arginine 112 contribute to the substrate site.

Belongs to the type-II 3-dehydroquinase family. Homododecamer.

The catalysed reaction is 3-dehydroquinate = 3-dehydroshikimate + H2O. The protein operates within metabolic intermediate biosynthesis; chorismate biosynthesis; chorismate from D-erythrose 4-phosphate and phosphoenolpyruvate: step 3/7. Catalyzes a trans-dehydration via an enolate intermediate. The chain is 3-dehydroquinate dehydratase from Cereibacter sphaeroides (strain ATCC 17023 / DSM 158 / JCM 6121 / CCUG 31486 / LMG 2827 / NBRC 12203 / NCIMB 8253 / ATH 2.4.1.) (Rhodobacter sphaeroides).